A 446-amino-acid polypeptide reads, in one-letter code: Glutamine synthetase (446 aa).

In terms of domain architecture, GS beta-grasp spans 18 to 103 (ENVRYLRLQF…LICDVYKTDG (86 aa)). Residues 110 to 446 (PRANLKRVLK…WERDQYMKQY (337 aa)) enclose the GS catalytic domain. Mg(2+)-binding residues include Glu-134 and Glu-136. Glu-186 lines the ATP pocket. Mg(2+)-binding residues include Glu-191 and Glu-198. Residues 242–243 (NG) and Gly-243 each bind L-glutamate. His-247 lines the Mg(2+) pocket. Residue Ser-251 participates in ATP binding. L-glutamate contacts are provided by Arg-300, Glu-306, and Arg-318. Positions 318 and 323 each coordinate ATP. Glu-335 serves as a coordination point for Mg(2+). L-glutamate is bound at residue Arg-337.

The protein belongs to the glutamine synthetase family. In terms of assembly, oligomer of 12 subunits arranged in the form of two hexagons. In its feedback-inhibited form, interacts with TnrA in order to block its DNA-binding activity. The cofactor is Mg(2+).

Its subcellular location is the cytoplasm. It catalyses the reaction L-glutamate + NH4(+) + ATP = L-glutamine + ADP + phosphate + H(+). With respect to regulation, inhibited by glutamine. Glutamine synthetase (GS) is an unusual multitasking protein that functions as an enzyme, a transcription coregulator, and a chaperone in ammonium assimilation and in the regulation of genes involved in nitrogen metabolism. It catalyzes the ATP-dependent biosynthesis of glutamine from glutamate and ammonia. Feedback-inhibited GlnA also interacts with and regulates the activity of the transcriptional regulator TnrA. During nitrogen limitation, TnrA is in its DNA-binding active state and turns on the transcription of genes required for nitrogen assimilation. Under conditions of nitrogen excess, feedback-inhibited GlnA forms a stable complex with TnrA, which inhibits its DNA-binding activity. In contrast, feedback-inhibited GlnA acts as a chaperone to stabilize the DNA-binding activity of GlnR, which represses the transcription of nitrogen assimilation genes. This is Glutamine synthetase from Staphylococcus aureus (strain MSSA476).